Reading from the N-terminus, the 234-residue chain is Isoprenyl transferase (234 aa).

Asp13 is an active-site residue. Residue Asp13 participates in Mg(2+) binding. Substrate contacts are provided by residues 14–17, Trp18, Arg26, His30, and 58–60; these read GNGR and STE. Asn61 functions as the Proton acceptor in the catalytic mechanism. Residues Trp62, Arg64, Arg180, and 186-188 contribute to the substrate site; that span reads RLS. Glu199 provides a ligand contact to Mg(2+).

The protein belongs to the UPP synthase family. Homodimer. Mg(2+) serves as cofactor.

In terms of biological role, catalyzes the condensation of isopentenyl diphosphate (IPP) with allylic pyrophosphates generating different type of terpenoids. The polypeptide is Isoprenyl transferase (uppS) (Helicobacter pylori (strain ATCC 700392 / 26695) (Campylobacter pylori)).